The primary structure comprises 250 residues: Urease accessory protein UreD (250 aa).

It belongs to the UreD family. As to quaternary structure, ureD, UreF and UreG form a complex that acts as a GTP-hydrolysis-dependent molecular chaperone, activating the urease apoprotein by helping to assemble the nickel containing metallocenter of UreC. The UreE protein probably delivers the nickel.

It localises to the cytoplasm. Functionally, required for maturation of urease via the functional incorporation of the urease nickel metallocenter. The polypeptide is Urease accessory protein UreD (Aliarcobacter butzleri (strain RM4018) (Arcobacter butzleri)).